A 132-amino-acid chain; its full sequence is Small ribosomal subunit protein uS9 (132 aa).

It belongs to the universal ribosomal protein uS9 family.

The protein is Small ribosomal subunit protein uS9 of Blochmanniella pennsylvanica (strain BPEN).